The following is a 376-amino-acid chain: 1-acyl-sn-glycerol-3-phosphate acyltransferase gamma (376 aa).

The Cytoplasmic portion of the chain corresponds to 1 to 124 (MGLLAYLKTQ…LGSSKVLAKR (124 aa)). The HXXXXD motif motif lies at 96-101 (HNFEID). Residues 125–145 (ELLCVPLIGWTWYFLEIVFCK) form a helical membrane-spanning segment. Topologically, residues 146–316 (RKWEEDRDTV…TLLNFLCWAT (171 aa)) are lumenal. Residues 317–339 (ILLSPLFSFVLGVFASGSPLLIL) form a helical membrane-spanning segment. Topologically, residues 340–376 (TFLGFVGAASFGVRRLIGVTEIEKGSSYGNQELKKKE) are cytoplasmic.

Belongs to the 1-acyl-sn-glycerol-3-phosphate acyltransferase family. In terms of tissue distribution, widely expressed. Mainly expressed in testis, kidney and liver (at protein level).

The protein resides in the endoplasmic reticulum membrane. Its subcellular location is the nucleus envelope. The enzyme catalyses a 1-acyl-sn-glycero-3-phosphate + an acyl-CoA = a 1,2-diacyl-sn-glycero-3-phosphate + CoA. It catalyses the reaction pentadecanoyl-CoA + 1-(9Z-octadecenoyl)-sn-glycero-3-phosphate = 1-(9Z)-octadecenoyl-2-pentadecanoyl-sn-glycero-3-phosphate + CoA. It carries out the reaction heptadecanoyl-CoA + 1-(9Z-octadecenoyl)-sn-glycero-3-phosphate = 1-(9Z)-octadecenoyl-2-heptadecanoyl-sn-glycero-3-phosphate + CoA. The catalysed reaction is 1-(9Z-octadecenoyl)-sn-glycero-3-phosphate + octadecanoyl-CoA = 1-(9Z-octadecenoyl)-2-octadecanoyl-sn-glycero-3-phosphate + CoA. The enzyme catalyses nonadecanoyl-CoA + 1-(9Z-octadecenoyl)-sn-glycero-3-phosphate = 1-(9Z)-octadecenoyl-2-nonadecanoyl-sn-glycero-3-phosphate + CoA. It catalyses the reaction 1-(9Z-octadecenoyl)-sn-glycero-3-phosphate + (5Z,8Z,11Z,14Z)-eicosatetraenoyl-CoA = 1-(9Z)-octadecenoyl-2-(5Z,8Z,11Z,14Z)-eicosatetraenoyl-sn-glycero-3-phosphate + CoA. It carries out the reaction 1-(9Z-octadecenoyl)-sn-glycero-3-phosphate + (9Z)-octadecenoyl-CoA = 1,2-di-(9Z-octadecenoyl)-sn-glycero-3-phosphate + CoA. The catalysed reaction is 1-(9Z-octadecenoyl)-sn-glycero-3-phosphate + (9Z,12Z)-octadecadienoyl-CoA = 1-(9Z)-octadecenoyl-2-(9Z,12Z)-octadecadienoyl-sn-glycero-3-phosphate + CoA. The enzyme catalyses 1-(9Z-octadecenoyl)-sn-glycero-3-phosphocholine + (5Z,8Z,11Z,14Z)-eicosatetraenoyl-CoA = 1-(9Z)-octadecenoyl-2-(5Z,8Z,11Z,14Z)-icosatetraenoyl-sn-glycero-3-phosphocholine + CoA. It catalyses the reaction 1-(9Z-octadecenoyl)-sn-glycero-3-phospho-(1D-myo-inositol) + (5Z,8Z,11Z,14Z)-eicosatetraenoyl-CoA = 1-(9Z-octadecenoyl)-2-(5Z,8Z,11Z,14Z-eicosatetraenoyl)-sn-glycero-3-phospho-1D-myo-inositol + CoA. It carries out the reaction 1-(9Z-octadecenoyl)-sn-glycero-3-phospho-L-serine + (5Z,8Z,11Z,14Z)-eicosatetraenoyl-CoA = 1-(9Z-octadecenoyl)-2-(5Z,8Z,11Z,14Z-eicosatetraenoyl)-sn-glycero-3-phospho-L-serine + CoA. The catalysed reaction is 1-hexadecanoyl-sn-glycero-3-phosphate + (9Z)-octadecenoyl-CoA = 1-hexadecanoyl-2-(9Z-octadecenoyl)-sn-glycero-3-phosphate + CoA. The enzyme catalyses 1-hexadecanoyl-sn-glycero-3-phosphate + (5Z,8Z,11Z,14Z)-eicosatetraenoyl-CoA = 1-hexadecanoyl-2-(5Z,8Z,11Z,14Z-eicosatetraenoyl)-sn-glycero-3-phosphate + CoA. It catalyses the reaction 1-heptadecanoyl-sn-glycero-3-phosphate + (5Z,8Z,11Z,14Z)-eicosatetraenoyl-CoA = 1-heptadecanoyl-2-(5Z,8Z,11Z,14Z)-eicosatetraenoyl-sn-glycero-3-phosphate + CoA. It carries out the reaction 1-octadecanoyl-sn-glycero-3-phosphate + (9Z)-octadecenoyl-CoA = 1-octadecanoyl-2-(9Z-octadecenoyl)-sn-glycero-3-phosphate + CoA. The catalysed reaction is 1-octadecanoyl-sn-glycero-3-phosphate + (5Z,8Z,11Z,14Z)-eicosatetraenoyl-CoA = 1-octadecanoyl-2-(5Z,8Z,11Z,14Z-eicosatetraenoyl)-sn-glycero-3-phosphate + CoA. The enzyme catalyses 1-(9Z-octadecenoyl)-sn-glycero-3-phosphate + hexadecanoyl-CoA = 1-hexadecanoyl-2-(9Z-octadecenoyl)-sn-glycero-3-phosphate + CoA. It catalyses the reaction 1-O-(9Z-octadecenyl)-sn-glycero-3-phosphate + (5Z,8Z,11Z,14Z)-eicosatetraenoyl-CoA = 1-O-(9Z-octadecenyl)-2-(5Z,8Z,11Z,14Z-eicosatetraenoyl)-sn-glycero-3-phosphate + CoA. It carries out the reaction a 1-acyl-sn-glycero-3-phospho-(1D-myo-inositol) + (5Z,8Z,11Z,14Z)-eicosatetraenoyl-CoA = a 1-acyl-2-(5Z,8Z,11Z,14Z-eicosatetraenoyl)-sn-glycero-3-phospho-(1D-myo-inositol) + CoA. It participates in phospholipid metabolism; CDP-diacylglycerol biosynthesis; CDP-diacylglycerol from sn-glycerol 3-phosphate: step 2/3. With respect to regulation, in males, activity increases in an age-dependent fashion, maybe derived from the induction by sex-hormones. Its function is as follows. Converts 1-acyl-sn-glycerol-3-phosphate (lysophosphatidic acid or LPA) into 1,2-diacyl-sn-glycerol-3-phosphate (phosphatidic acid or PA) by incorporating an acyl moiety at the sn-2 position of the glycerol backbone. Acts on LPA containing saturated or unsaturated fatty acids C16:0-C20:4 at the sn-1 position using C18:1, C20:4 or C18:2-CoA as the acyl donor. Also acts on lysophosphatidylcholine, lysophosphatidylinositol and lysophosphatidylserine using C18:1 or C20:4-CoA. Has a preference for arachidonoyl-CoA as a donor. Also has a modest lysophosphatidylinositol acyltransferase (LPIAT) activity, converts lysophosphatidylinositol (LPI) into phosphatidylinositol. This chain is 1-acyl-sn-glycerol-3-phosphate acyltransferase gamma, found in Mus musculus (Mouse).